The primary structure comprises 132 residues: UPF0146 protein PF0123 (132 aa).

It belongs to the UPF0146 family.

The sequence is that of UPF0146 protein PF0123 from Pyrococcus furiosus (strain ATCC 43587 / DSM 3638 / JCM 8422 / Vc1).